The chain runs to 1801 residues: MSDDIRKRFEFPNSLIQSQAVGHLIAAVLKENGFSEKIHQSTNQTPALNLLWEKCCSDNVVVRTACCEGLVALVAQDHAEFSYVLNGILNLIPSTRNTHGLIKAIMHLLQMQALKEGQGGEKNIQSIYTIRNHPHPLITVLEHRPDCWPVFLQQLTAFFQQCPERLEVSCIQIMAPFLWYLYCEPSQLQEYAKLRLALLKVLLQPQVLCDKDQPSILEQQILQLCCDIVPCLQVKDLIQTTEAMMFIEEVCLSLLRHPVFWKIQLTQMSLQLLCVSEVSLKITGECSSSIHLLEHSVELLKEDFPVELVIIGIALLLLQTPASQQKPILNLALKLLSVTEDQKIPKSSLLLVMPILQILSSTALEDCISVDEEGPSRQQLALNLLEMIQQECYRDDHQKLSYKLVCPVTSMYGTIFTAWRILEVMTDSSAASDWLASVESLLPITAVIPAPAFLLLAHLLVEDKGQNLHQILKVTTELAQADSSQVPNLIPVLMFKLGRPLEPILYNDILYTLPKLGVHKVCIGQILRIIQLLGTTPRLRAVTLRLLTSLWEKQDRVYPELQRFMAVSDVPSLSVGKEVQWEKLIAKAASIRDICKQRPYQHGADMLAAISQVLNECTKPDQATPAALVLQGLHALCQAEVVCIRSTWNALSPKLSCDTRPLILKTLSELFSLVPSLTVNTTEYENFKVQVLSFLWTHTQNKDPIVANAAYRSLANFSAGEHTILHLPEKIRPEIPIPEELDDDEDVEDVDLSVPGSCYLKLLSLTPPLVLPALEEFFTSLVKQEMVNMPRGIYHSALKGGARSDQGKTVAGIPNFILKMYETNKQPGLKPGLAGGMLFCYDVSMYQSKDGKPLNRLMASRGRSFKQTSLALVHEVHIQLSEWHRAIFLPQAWLAYMNRAYHAILQGRLGELELQLKHGKEEPEEVQYKKSTAWLWVRDMLTDEITKAAAKESPVVKGNALLALSSLAVVVSRHEASLSSDSDGLLEVQPNFLSMKEWVSMVLDTLLVIVDSHYQPRGQLLSWFYYKSYSGENTASAIARSAAATALSLLVPVFIISCKEKVEEILNMLTARLPGKPSADESQAVQIHMGLALGMFLSRLCEEKLSDISGQEMNLLLMKSLDALENCCFDTSLEYNTGCILGVGLVLSLMSHSSQMQSRVHVAALLRKLSAHVDDSGSQSRTFQEVLAYTLSCVCTSAFSAGIIEATEAEDVMNKLRLLVENSQQTSGFALALGNIVHGLSVCGHGKAEDLGSKLLPAWIRIVLTEGTPTMLCLAALHGMVALVGSEGDVMQLKSEAIQTSHFQGRLNEVIRTLTQVISVSGVIGLQSNAVWLLGHLHLSTLSSSQSRASVPTDYSYLPESSFIGAAIGFFITGGKKGPESVPPSLLKVVMKPIATVGESYQYPPVNWAALLSPLMRLNFGEEIQQLCLEIMVTQAQSSQNAAALLGLWVTPPLIHSLSLNTKRYLLISAPLWIKHISDEQILGFVENLMVAVFKAASPLGSPELCPSALHGLSQAMKLPSPAHHLWSLLSEATGKIFDLLPNKIRRKDLELYISIAKCLLEMTDDDANRIAQVTKSNIEKAAFVKLYLVSQGRFPLVNLTDMLSVAVQHREKEVLAWMILHSLYQARIVSHANTGVLKRMEWLLELMGYIRNVAYQSTSFHNTALDKALDFFLLIFATAVVAWADHTAPLLLGLSASWLPWHQENGPAGPVPSFLGRSPMHRVTLQEVLTLLPNSMALLLQKEPWKEQTQKFIDWLFSIMESPKEALSAQSRDLLKATLLSLRVLPEFKKKAVWTRAYGW.

Lys819 is modified (N6-acetyllysine).

In terms of assembly, interacts with VCL. Ubiquitous. High expression in brain followed by testis, muscle, pancreas, heart, ovary, small intestine, placenta, prostate, thymus, kidney, colon, liver, lung, spleen and leukocytes. Expression is reduced in most glioblastomas and all glioblastoma cell lines.

The protein resides in the cell junction. It is found in the focal adhesion. Its subcellular location is the cytoplasm. The protein localises to the cytosol. In terms of biological role, required for the maintenance of SKIC2 and SKIC3 proteostatic levels in the liver. May be involved in the regulation of RNA degradation by the exosome complex. Potential tumor suppressor in gliomas. The protein is Focadhesin of Homo sapiens (Human).